The sequence spans 408 residues: UDP-N-acetylglucosamine--dolichyl-phosphate N-acetylglucosaminephosphotransferase (408 aa).

Residues 1-10 (MWAFPELPLP) are Lumenal-facing. A helical transmembrane segment spans residues 11–38 (LLVNLFGSLLGFVATVTLIPAFRSHFIA). The Cytoplasmic portion of the chain corresponds to 39 to 58 (ARLCGQDLNKLSRQQIPESQ). UDP-N-acetyl-alpha-D-glucosamine contacts are provided by residues 44–46 (QDL) and E56. A helical membrane pass occupies residues 59–78 (GVICGAVFLIILFCFIPFPF). The Lumenal portion of the chain corresponds to 79-91 (LNCFVEEQCKAFP). A helical transmembrane segment spans residues 92–118 (HHEFVALIGALLAICCMIFLGFADDVL). Over 119–121 (NLP) the chain is Cytoplasmic. A helical transmembrane segment spans residues 122 to 143 (WRHKLLLPTAASLPLLMVYFTN). Residue K125 participates in dolichyl phosphate binding. The Lumenal portion of the chain corresponds to 144-166 (FGNTTIVVPKPFRWILGLHLDLG). An N-linked (GlcNAc...) asparagine glycan is attached at N146. A helical membrane pass occupies residues 167-186 (ILYYVYMGLLAVFCTNAINI). Dolichyl phosphate is bound at residue 178 to 186 (VFCTNAINI). N185 serves as a coordination point for Mg(2+). Residues 187 to 192 (LAGING) lie on the Cytoplasmic side of the membrane. N191 serves as a coordination point for UDP-N-acetyl-alpha-D-glucosamine. Residues 193 to 213 (LEAGQSLVISASIIVFNLVEL) traverse the membrane as a helical segment. Residues 214–218 (EGDYR) lie on the Lumenal side of the membrane. The chain crosses the membrane as a helical span at residues 219 to 242 (DDHVFSLYFMIPFFFTTLGLLYHN). Over 243–250 (WYPSQVFV) the chain is Cytoplasmic. Residues 251–269 (GDTFCYFAGMTFAVVGILG) form a helical membrane-spanning segment. D252 is a binding site for Mg(2+). Over 270 to 271 (HF) the chain is Lumenal. Residues 272–293 (SKTMLLFFIPQVFNFLYSLPQL) traverse the membrane as a helical segment. The Cytoplasmic portion of the chain corresponds to 294 to 375 (LHAIPCPRHR…LLLKIFGPIH (82 aa)). 301–303 (RHR) provides a ligand contact to UDP-N-acetyl-alpha-D-glucosamine. The chain crosses the membrane as a helical span at residues 376–400 (ERNLTLLLLLLQILSSAVTFSIRYQ). Residues 401 to 408 (LVRLFYDV) are Lumenal-facing.

The protein belongs to the glycosyltransferase 4 family. In terms of assembly, homodimer. Requires Mg(2+) as cofactor.

Its subcellular location is the endoplasmic reticulum membrane. It catalyses the reaction a di-trans,poly-cis-dolichyl phosphate + UDP-N-acetyl-alpha-D-glucosamine = an N-acetyl-alpha-D-glucosaminyl-diphospho-di-trans,poly-cis-dolichol + UMP. It functions in the pathway protein modification; protein glycosylation. With respect to regulation, inhibited by natural nucleoside antibiotic tunicamycin, which acts as a structural analog and competitor of UDP-GlcNAc. UDP-N-acetylglucosamine--dolichyl-phosphate N-acetylglucosaminephosphotransferase that operates in the biosynthetic pathway of dolichol-linked oligosaccharides, the glycan precursors employed in protein asparagine (N)-glycosylation. The assembly of dolichol-linked oligosaccharides begins on the cytosolic side of the endoplasmic reticulum membrane and finishes in its lumen. The sequential addition of sugars to dolichol pyrophosphate produces dolichol-linked oligosaccharides containing fourteen sugars, including two GlcNAcs, nine mannoses and three glucoses. Once assembled, the oligosaccharide is transferred from the lipid to nascent proteins by oligosaccharyltransferases. Catalyzes the initial step of dolichol-linked oligosaccharide biosynthesis, transfering GlcNAc-1-P from cytosolic UDP-GlcNAc onto the carrier lipid dolichyl phosphate (P-dolichol), yielding GlcNAc-P-P-dolichol embedded in the cytoplasmic leaflet of the endoplasmic reticulum membrane. The polypeptide is UDP-N-acetylglucosamine--dolichyl-phosphate N-acetylglucosaminephosphotransferase (DPAGT1) (Cricetulus longicaudatus (Long-tailed dwarf hamster)).